The following is a 145-amino-acid chain: Ribosome maturation factor RimP (145 aa).

This sequence belongs to the RimP family.

Its subcellular location is the cytoplasm. Its function is as follows. Required for maturation of 30S ribosomal subunits. This Borrelia garinii subsp. bavariensis (strain ATCC BAA-2496 / DSM 23469 / PBi) (Borreliella bavariensis) protein is Ribosome maturation factor RimP.